Consider the following 320-residue polypeptide: MARTKIALIGAGNIGGTLAHLAASKELGDVVLFDVVEGVPQGKALDLSQCGPVEGFDAKLKGTNDYADIAGADVIIVTAGVARKPGMSRDDLLGINLKVMKSVGEGIKANAPDAFVICITNPLDAMVWALREFSGLPHNKVVGMAGVLDSARFATFLAEEFNVSVQDVTTFVLGGHGDTMVPVVEYSTVAGIPIPDLIKMGWSTQERIDAIVQRTRSGGGEIVALLKTGSAFYAPATSAIAMAESYLKDKKRVLPCAAYLSGEYGVDDLYVGVPVIIGANGVEKIVEINLSDSAKANLQVSVDAVKELLVACKGIDSSLA.

NAD(+)-binding positions include 10 to 15 (GAGNIG) and Asp34. Arg83 and Arg89 together coordinate substrate. Residues Asn96 and 119 to 121 (ITN) each bind NAD(+). Substrate is bound by residues Asn121 and Arg152. His176 (proton acceptor) is an active-site residue.

It belongs to the LDH/MDH superfamily. MDH type 3 family.

The enzyme catalyses (S)-malate + NAD(+) = oxaloacetate + NADH + H(+). Its function is as follows. Catalyzes the reversible oxidation of malate to oxaloacetate. The polypeptide is Malate dehydrogenase (Rhizorhabdus wittichii (strain DSM 6014 / CCUG 31198 / JCM 15750 / NBRC 105917 / EY 4224 / RW1) (Sphingomonas wittichii)).